A 362-amino-acid chain; its full sequence is DNA replication and repair protein RecF (362 aa).

Residue 31–38 (GDNAAGKT) coordinates ATP.

This sequence belongs to the RecF family.

The protein localises to the cytoplasm. Functionally, the RecF protein is involved in DNA metabolism; it is required for DNA replication and normal SOS inducibility. RecF binds preferentially to single-stranded, linear DNA. It also seems to bind ATP. This is DNA replication and repair protein RecF from Hydrogenovibrio crunogenus (strain DSM 25203 / XCL-2) (Thiomicrospira crunogena).